Reading from the N-terminus, the 355-residue chain is Guanine nucleotide-binding protein G(i) subunit alpha-2 (355 aa).

Gly2 is lipidated: N-myristoyl glycine. A lipid anchor (S-palmitoyl cysteine) is attached at Cys3. The G-alpha domain maps to 32–355 (REVKLLLLGA…KNNLKDCGLF (324 aa)). The tract at residues 35 to 48 (KLLLLGAGESGKST) is G1 motif. Residues 40 to 47 (GAGESGKS), 176 to 182 (LRTRVKT), 201 to 205 (DVGGQ), 270 to 273 (NKKD), and Ala327 each bind GTP. Residue Ser47 coordinates Mg(2+). The interval 174 to 182 (DVLRTRVKT) is G2 motif. Residue Arg179 is modified to ADP-ribosylarginine; by cholera toxin. A Mg(2+)-binding site is contributed by Thr182. The G3 motif stretch occupies residues 197–206 (FKMFDVGGQR). Gln205 is subject to Deamidated glutamine; by Photorhabdus PAU_02230. The G4 motif stretch occupies residues 266–273 (ILFLNKKD). Residues 325-330 (TCATDT) form a G5 motif region. Cys352 is modified (ADP-ribosylcysteine; by pertussis toxin).

It belongs to the G-alpha family. G(i/o/t/z) subfamily. G proteins are composed of 3 units; alpha, beta and gamma. The alpha chain contains the guanine nucleotide binding site. In this context, interacts with GNB2. Interacts with GPSM1. Interacts with RGS12 and RGS14. Interacts with UNC5B. Interacts (inactive GDP-bound form) with NUCB1 (via GBA motif); the interaction leads to activation of GNAI3. Interacts (inactive GDP-bound form) with CCDC88C/DAPLE (via GBA motif). Interacts (inactive GDP-bound form) with CCDC8A/GIV (via GBA motif). Interacts with CXCR1 and CXCR2. In terms of processing, (Microbial infection) Deamidated at Gln-205 by Photorhabdus asymbiotica toxin PAU_02230, blocking GTP hydrolysis of heterotrimeric GNAQ or GNA11 and G-alphai (GNAI1, GNAI2 or GNAI3) proteins, thereby activating RhoA.

It is found in the cytoplasm. The protein localises to the cytoskeleton. It localises to the microtubule organizing center. Its subcellular location is the centrosome. The protein resides in the cell membrane. It is found in the membrane. In terms of biological role, guanine nucleotide-binding proteins (G proteins) are involved as modulators or transducers in various transmembrane signaling systems. The G(i) proteins are involved in hormonal regulation of adenylate cyclase: they inhibit the cyclase in response to beta-adrenergic stimuli. May play a role in cell division. Its function is as follows. Regulates the cell surface density of dopamine receptors DRD2 by sequestrating them as an intracellular pool. The sequence is that of Guanine nucleotide-binding protein G(i) subunit alpha-2 (GNAI2) from Homo sapiens (Human).